The following is a 181-amino-acid chain: ATP-dependent protease subunit HslV (181 aa).

Thr-7 is a catalytic residue. Na(+) contacts are provided by Gly-164, Cys-167, and Thr-170.

Belongs to the peptidase T1B family. HslV subfamily. As to quaternary structure, a double ring-shaped homohexamer of HslV is capped on each side by a ring-shaped HslU homohexamer. The assembly of the HslU/HslV complex is dependent on binding of ATP.

It localises to the cytoplasm. It carries out the reaction ATP-dependent cleavage of peptide bonds with broad specificity.. Allosterically activated by HslU binding. Protease subunit of a proteasome-like degradation complex believed to be a general protein degrading machinery. The protein is ATP-dependent protease subunit HslV of Shouchella clausii (strain KSM-K16) (Alkalihalobacillus clausii).